We begin with the raw amino-acid sequence, 521 residues long: ATP synthase subunit beta (521 aa).

2 stretches are compositionally biased toward low complexity: residues 1-21 and 28-42; these read MAKA…AAKA and PKTT…TKSG. Positions 1–42 are disordered; sequence MAKAATPKTTAAAEAKPAAKAPAKKAAPKTTAAAKPAATKSG. 199-206 contributes to the ATP binding site; the sequence is GGAGVGKT.

Belongs to the ATPase alpha/beta chains family. F-type ATPases have 2 components, CF(1) - the catalytic core - and CF(0) - the membrane proton channel. CF(1) has five subunits: alpha(3), beta(3), gamma(1), delta(1), epsilon(1). CF(0) has three main subunits: a(1), b(2) and c(9-12). The alpha and beta chains form an alternating ring which encloses part of the gamma chain. CF(1) is attached to CF(0) by a central stalk formed by the gamma and epsilon chains, while a peripheral stalk is formed by the delta and b chains.

It is found in the cell inner membrane. The enzyme catalyses ATP + H2O + 4 H(+)(in) = ADP + phosphate + 5 H(+)(out). Its function is as follows. Produces ATP from ADP in the presence of a proton gradient across the membrane. The catalytic sites are hosted primarily by the beta subunits. This Brucella abortus (strain 2308) protein is ATP synthase subunit beta.